The primary structure comprises 138 residues: FLKIAEVGAGGNKLTLSMSVAVEFRDYLGDFIEHYAQLGPSQPPDLAQAQDEPRYYMDLKENQRGPGLGSTQGQTIALPAQGLIEFRLIDDYGVEEEPAELPEGTSLTVDNKRFFFDVGSNKVSEVKPTYRFGHTFCK.

Ser-70 bears the Phosphoserine mark.

This sequence belongs to the PUR DNA-binding protein family. As to quaternary structure, homodimer, heterodimer with PURB and heterotrimer with PURB and YBX1/Y-box protein 1. Interacts with FMR1; this interaction occurs in association with polyribosome.

The protein resides in the nucleus. This is a probable transcription activator that specifically binds the purine-rich single strand of the PUR element located upstream of the c-Myc gene. May play a role in the initiation of DNA replication and in recombination. The chain is Transcriptional activator protein Pur-alpha from Rattus norvegicus (Rat).